The primary structure comprises 208 residues: Small ribosomal subunit protein uS4 (208 aa).

Positions Gln98–Leu161 constitute an S4 RNA-binding domain.

The protein belongs to the universal ribosomal protein uS4 family. As to quaternary structure, part of the 30S ribosomal subunit. Contacts protein S5. The interaction surface between S4 and S5 is involved in control of translational fidelity.

Its function is as follows. One of the primary rRNA binding proteins, it binds directly to 16S rRNA where it nucleates assembly of the body of the 30S subunit. Functionally, with S5 and S12 plays an important role in translational accuracy. The sequence is that of Small ribosomal subunit protein uS4 from Aliarcobacter butzleri (strain RM4018) (Arcobacter butzleri).